Consider the following 407-residue polypeptide: CCCH-type zinc finger protein oma-1 (407 aa).

The interval 1–39 (MNVNGENNEKIDEHHLESSLAGVPTLPVSPLDHAKDLSQ) is disordered. The segment covering 7–17 (NNEKIDEHHLE) has biased composition (basic and acidic residues). The segment at 46–80 (IGDLVTQTANLIAIKKQLLEDIAFNQHIQSMQVRA) is required for taf-4 binding. C3H1-type zinc fingers lie at residues 112 to 140 (SYKTVICQAWLESKTCSFADNCRFAHGEE) and 154 to 182 (KYKTKLCDKYTTTGLCPYGKRCLFIHPDH). T239 carries the post-translational modification Phosphothreonine; by mbk-2 and GSK3. Residue S302 is modified to Phosphoserine; by mbk-2. At T339 the chain carries Phosphothreonine; by GSK3.

Interacts with taf-4 (via C-terminus). Interacts with ifet-1. Component of a ribonucleoprotein particle complex that interacts with cgh-1 and car-1 in an RNA-dependent manner. Association with many proteins is dependent on the presence of RNA. Post-translationally, phosphorylation by mbk-2 and by gsk-3 are required for its rapid degradation following meiosis II. In terms of tissue distribution, exclusively expressed in the hermaphrodite gonad. Expressed prior to oocyte division. Widely distributed throughout gonadal oocytes from the mitotic stage to the developing diakinesis stage. Expressed in sperm.

It localises to the cytoplasm. The protein localises to the cytoplasmic granule. Its subcellular location is the nucleus. In terms of biological role, zinc-finger RNA-binding protein that binds to 5'-UA[AU]-3' motifs in the 3'-UTR of maternal mRNAs to suppress translation in oocytes and embryos. Acts as a ribonucleoprotein particle component that may exert part of its function within cytoplasmic foci of unfertilized oocytes. Acts redundantly with oma-2 to control the temporal expression and distribution of maternal proteins and thereby promote meiotic progression, oocyte maturation, fertilization and embryonic development. Recruits the translational repressor ifet-1 to the 3'-UTR of mei-1 and zif-1 to negatively regulate their translation. By suppressing the translation of the E3 ligase zif-1, may in turn play a role in the stabilization of zif-1 targets such as the maternal transcriptional repressor protein pie-1. Following fertilization, sequesters the transcription initiation factor, taf-4, in the cytoplasm, which prevents its nuclear localization and thus allows for transcriptional suppression in early embryos, but not in oocytes. Also, together with oma-2, is involved in P-granule distribution during embryonic development. In Caenorhabditis elegans, this protein is CCCH-type zinc finger protein oma-1.